The following is a 284-amino-acid chain: 4-diphosphocytidyl-2-C-methyl-D-erythritol kinase (284 aa).

Lysine 10 is a catalytic residue. Proline 95–serine 105 is an ATP binding site. Residue aspartate 137 is part of the active site.

It belongs to the GHMP kinase family. IspE subfamily.

The catalysed reaction is 4-CDP-2-C-methyl-D-erythritol + ATP = 4-CDP-2-C-methyl-D-erythritol 2-phosphate + ADP + H(+). The protein operates within isoprenoid biosynthesis; isopentenyl diphosphate biosynthesis via DXP pathway; isopentenyl diphosphate from 1-deoxy-D-xylulose 5-phosphate: step 3/6. Catalyzes the phosphorylation of the position 2 hydroxy group of 4-diphosphocytidyl-2C-methyl-D-erythritol. This Levilactobacillus brevis (strain ATCC 367 / BCRC 12310 / CIP 105137 / JCM 1170 / LMG 11437 / NCIMB 947 / NCTC 947) (Lactobacillus brevis) protein is 4-diphosphocytidyl-2-C-methyl-D-erythritol kinase.